Here is a 292-residue protein sequence, read N- to C-terminus: Small ribosomal subunit protein uS5 (292 aa).

The tract at residues 1–56 (MADDAGAAGGPGGPGGPGMGGRGGFRGGFGSGIRGRGRGRGRGRGRGRGARGGKAE) is disordered. Ala-2 carries the post-translational modification N-acetylalanine. The segment covering 7–34 (AAGGPGGPGGPGMGGRGGFRGGFGSGIR) has biased composition (gly residues). Residues 35–51 (GRGRGRGRGRGRGRGAR) show a composition bias toward basic residues. Residues Lys-54 and Lys-58 each participate in a glycyl lysine isopeptide (Lys-Gly) (interchain with G-Cter in ubiquitin) cross-link. Residues 102-165 (LKDEVLKIMP…ILAKLSIVPV (64 aa)) form the S5 DRBM domain. Thr-251 carries the phosphothreonine modification. Lys-262 is modified (N6-acetyllysine). Ser-263 bears the Phosphoserine mark. Residue Thr-269 is modified to Phosphothreonine. The residue at position 274 (Lys-274) is an N6-acetyllysine; alternate. Lys-274 is covalently cross-linked (Glycyl lysine isopeptide (Lys-Gly) (interchain with G-Cter in SUMO1); alternate). A Glycyl lysine isopeptide (Lys-Gly) (interchain with G-Cter in SUMO2); alternate cross-link involves residue Lys-274. Lys-274 participates in a covalent cross-link: Glycyl lysine isopeptide (Lys-Gly) (interchain with G-Cter in ubiquitin); alternate. Ser-280 carries the post-translational modification Phosphoserine.

It belongs to the universal ribosomal protein uS5 family. Component of the small ribosomal subunit. Interacts with zinc finger protein ZNF277 (via zinc-finger domains); the interaction is direct; the interaction is extra-ribosomal. Interaction with ZNF277 competes with the binding of RPS2 to protein arginine methyltransferase PRMT3. Post-translationally, citrullinated by PADI4 in the Arg/Gly-rich region. In terms of processing, asymmetric arginine dimethylation by PRMT3 occurs at multiple sites in the Arg/Gly-rich region. Monoubiquitinated at Lys-54 and Lys-58 by RNF10 when a ribosome has stalled during translation, leading to its degradation by the proteasome. Deubiquitinated at Lys-54 and Lys-58 by USP10, preventing degradation by the proteasome and promoting 40S ribosome subunit recycling following ribosome dissociation.

It localises to the cytoplasm. The protein localises to the nucleus. It is found in the nucleolus. Component of the ribosome, a large ribonucleoprotein complex responsible for the synthesis of proteins in the cell. The small ribosomal subunit (SSU) binds messenger RNAs (mRNAs) and translates the encoded message by selecting cognate aminoacyl-transfer RNA (tRNA) molecules. The large subunit (LSU) contains the ribosomal catalytic site termed the peptidyl transferase center (PTC), which catalyzes the formation of peptide bonds, thereby polymerizing the amino acids delivered by tRNAs into a polypeptide chain. The nascent polypeptides leave the ribosome through a tunnel in the LSU and interact with protein factors that function in enzymatic processing, targeting, and the membrane insertion of nascent chains at the exit of the ribosomal tunnel. Plays a role in the assembly and function of the 40S ribosomal subunit. In Oryctolagus cuniculus (Rabbit), this protein is Small ribosomal subunit protein uS5 (RPS2).